The sequence spans 909 residues: Protein translocase subunit SecA (909 aa).

ATP-binding positions include Gln-87, 105–109, and Asp-507; that span reads GEGKT. Residues 857–909 form a disordered region; sequence DTHSELAEEQPPVAENRENKQQPFVRKNEKVGRNDPCPCGSGKKYKQCHGKLN. The span at 871–889 shows a compositional bias: basic and acidic residues; the sequence is ENRENKQQPFVRKNEKVGR. Zn(2+)-binding residues include Cys-893, Cys-895, Cys-904, and His-905. Basic residues predominate over residues 899 to 909; it reads KKYKQCHGKLN.

This sequence belongs to the SecA family. In terms of assembly, monomer and homodimer. Part of the essential Sec protein translocation apparatus which comprises SecA, SecYEG and auxiliary proteins SecDF-YajC and YidC. Zn(2+) is required as a cofactor.

The protein localises to the cell inner membrane. It localises to the cytoplasm. The enzyme catalyses ATP + H2O + cellular proteinSide 1 = ADP + phosphate + cellular proteinSide 2.. Its function is as follows. Part of the Sec protein translocase complex. Interacts with the SecYEG preprotein conducting channel. Has a central role in coupling the hydrolysis of ATP to the transfer of proteins into and across the cell membrane, serving both as a receptor for the preprotein-SecB complex and as an ATP-driven molecular motor driving the stepwise translocation of polypeptide chains across the membrane. The polypeptide is Protein translocase subunit SecA (Nitrosomonas europaea (strain ATCC 19718 / CIP 103999 / KCTC 2705 / NBRC 14298)).